We begin with the raw amino-acid sequence, 316 residues long: ATP synthase gamma chain (316 aa).

This sequence belongs to the ATPase gamma chain family. As to quaternary structure, F-type ATPases have 2 components, CF(1) - the catalytic core - and CF(0) - the membrane proton channel. CF(1) has five subunits: alpha(3), beta(3), gamma(1), delta(1), epsilon(1). CF(0) has three main subunits: a, b and c.

Its subcellular location is the cellular thylakoid membrane. In terms of biological role, produces ATP from ADP in the presence of a proton gradient across the membrane. The gamma chain is believed to be important in regulating ATPase activity and the flow of protons through the CF(0) complex. The protein is ATP synthase gamma chain of Prochlorococcus marinus subsp. pastoris (strain CCMP1986 / NIES-2087 / MED4).